A 59-amino-acid chain; its full sequence is Protein translocase subunit SecE (59 aa).

The chain crosses the membrane as a helical span at residues 37-57 (LIVLLFVGLLAFLVQLAFSIL).

The protein belongs to the SecE/SEC61-gamma family. In terms of assembly, component of the Sec protein translocase complex. Heterotrimer consisting of SecY (alpha), SecG (beta) and SecE (gamma) subunits. The heterotrimers can form oligomers, although 1 heterotrimer is thought to be able to translocate proteins. Interacts with the ribosome. May interact with SecDF, and other proteins may be involved.

Its subcellular location is the cell membrane. Functionally, essential subunit of the Sec protein translocation channel SecYEG. Clamps together the 2 halves of SecY. May contact the channel plug during translocation. The chain is Protein translocase subunit SecE from Metallosphaera sedula (strain ATCC 51363 / DSM 5348 / JCM 9185 / NBRC 15509 / TH2).